The primary structure comprises 238 residues: Ribonuclease PH (238 aa).

The interval 66-88 is disordered; that stretch reads LPRSTHTRSDREAARGKQSGRTQ. Phosphate contacts are provided by residues arginine 86 and 124–126; that span reads GTR.

It belongs to the RNase PH family. In terms of assembly, homohexameric ring arranged as a trimer of dimers.

The enzyme catalyses tRNA(n+1) + phosphate = tRNA(n) + a ribonucleoside 5'-diphosphate. In terms of biological role, phosphorolytic 3'-5' exoribonuclease that plays an important role in tRNA 3'-end maturation. Removes nucleotide residues following the 3'-CCA terminus of tRNAs; can also add nucleotides to the ends of RNA molecules by using nucleoside diphosphates as substrates, but this may not be physiologically important. Probably plays a role in initiation of 16S rRNA degradation (leading to ribosome degradation) during starvation. In Ralstonia pickettii (strain 12J), this protein is Ribonuclease PH.